Reading from the N-terminus, the 118-residue chain is Large ribosomal subunit protein uL18 (118 aa).

The protein belongs to the universal ribosomal protein uL18 family. As to quaternary structure, part of the 50S ribosomal subunit; part of the 5S rRNA/L5/L18/L25 subcomplex. Contacts the 5S and 23S rRNAs.

This is one of the proteins that bind and probably mediate the attachment of the 5S RNA into the large ribosomal subunit, where it forms part of the central protuberance. The polypeptide is Large ribosomal subunit protein uL18 (Nitrosospira multiformis (strain ATCC 25196 / NCIMB 11849 / C 71)).